The following is a 100-amino-acid chain: Small ribosomal subunit protein uS14c (100 aa).

Belongs to the universal ribosomal protein uS14 family. As to quaternary structure, part of the 30S ribosomal subunit.

The protein localises to the plastid. It localises to the chloroplast. In terms of biological role, binds 16S rRNA, required for the assembly of 30S particles. This Gossypium barbadense (Sea Island cotton) protein is Small ribosomal subunit protein uS14c.